The sequence spans 503 residues: Aminoaldehyde dehydrogenase 1, peroxisomal (503 aa).

Residues isoleucine 28, aspartate 99, and leucine 189 each coordinate Na(+). An NAD(+)-binding site is contributed by 238–245 (GSTMTGSK). Glutamate 260 serves as the catalytic Proton acceptor. NAD(+) is bound by residues cysteine 294 and glutamate 393. Cysteine 294 functions as the Nucleophile in the catalytic mechanism.

The protein belongs to the aldehyde dehydrogenase family. In terms of tissue distribution, expressed in leaves, flowers and fruits.

The protein resides in the cytoplasm. Its subcellular location is the cytosol. It catalyses the reaction 4-aminobutanal + NAD(+) + H2O = 4-aminobutanoate + NADH + 2 H(+). The enzyme catalyses 3-aminopropanal + NAD(+) + H2O = beta-alanine + NADH + 2 H(+). It participates in amine and polyamine biosynthesis; betaine biosynthesis via choline pathway; betaine from betaine aldehyde: step 1/1. Its function is as follows. Dehydrogenase that catalyzes the oxidation of several aminoaldehydes. Metabolizes and detoxifies aldehyde products of polyamine degradation to non-toxic amino acids. Catalyzes the oxidation of 4-aminobutanal and 3-aminopropanal to 4-aminobutanoate and beta-alanine, respectively. The protein is Aminoaldehyde dehydrogenase 1, peroxisomal of Malus domestica (Apple).